The sequence spans 500 residues: Na(+)/H(+) antiporter NhaB (500 aa).

A run of 12 helical transmembrane segments spans residues F28 to G50, G68 to A88, L98 to F118, L121 to L141, F145 to V165, L205 to P225, Q244 to E264, A301 to L318, F350 to I370, M394 to I414, V449 to L469, and M477 to S497.

The protein belongs to the NhaB Na(+)/H(+) (TC 2.A.34) antiporter family.

The protein resides in the cell inner membrane. The enzyme catalyses 2 Na(+)(in) + 3 H(+)(out) = 2 Na(+)(out) + 3 H(+)(in). Its function is as follows. Na(+)/H(+) antiporter that extrudes sodium in exchange for external protons. In Pseudomonas paraeruginosa (strain DSM 24068 / PA7) (Pseudomonas aeruginosa (strain PA7)), this protein is Na(+)/H(+) antiporter NhaB.